A 204-amino-acid polypeptide reads, in one-letter code: Proteasome subunit beta (204 aa).

Residues 1 to 8 constitute a propeptide, removed in mature form; by autocatalysis; it reads MDDKILEG. Threonine 9 functions as the Nucleophile in the catalytic mechanism.

It belongs to the peptidase T1B family. The 20S proteasome core is composed of 14 alpha and 14 beta subunits that assemble into four stacked heptameric rings, resulting in a barrel-shaped structure. The two inner rings, each composed of seven catalytic beta subunits, are sandwiched by two outer rings, each composed of seven alpha subunits. The catalytic chamber with the active sites is on the inside of the barrel. Has a gated structure, the ends of the cylinder being occluded by the N-termini of the alpha-subunits. Is capped at one or both ends by the proteasome regulatory ATPase, PAN.

The protein resides in the cytoplasm. It carries out the reaction Cleavage of peptide bonds with very broad specificity.. Its activity is regulated as follows. The formation of the proteasomal ATPase PAN-20S proteasome complex, via the docking of the C-termini of PAN into the intersubunit pockets in the alpha-rings, triggers opening of the gate for substrate entry. Interconversion between the open-gate and close-gate conformations leads to a dynamic regulation of the 20S proteasome proteolysis activity. Component of the proteasome core, a large protease complex with broad specificity involved in protein degradation. The sequence is that of Proteasome subunit beta from Methanobrevibacter smithii (strain ATCC 35061 / DSM 861 / OCM 144 / PS).